We begin with the raw amino-acid sequence, 279 residues long: 2-dehydro-3-deoxyphosphooctonate aldolase (279 aa).

The protein belongs to the KdsA family.

It is found in the cytoplasm. It catalyses the reaction D-arabinose 5-phosphate + phosphoenolpyruvate + H2O = 3-deoxy-alpha-D-manno-2-octulosonate-8-phosphate + phosphate. It functions in the pathway carbohydrate biosynthesis; 3-deoxy-D-manno-octulosonate biosynthesis; 3-deoxy-D-manno-octulosonate from D-ribulose 5-phosphate: step 2/3. The protein operates within bacterial outer membrane biogenesis; lipopolysaccharide biosynthesis. The polypeptide is 2-dehydro-3-deoxyphosphooctonate aldolase (Bartonella henselae (strain ATCC 49882 / DSM 28221 / CCUG 30454 / Houston 1) (Rochalimaea henselae)).